The sequence spans 417 residues: Glutamyl-tRNA reductase (417 aa).

Substrate contacts are provided by residues 49–52, S105, 110–112, and Q116; these read TCNR and EPQ. The active-site Nucleophile is the C50. NADP(+) is bound at residue 185–190; the sequence is GAGEMI.

It belongs to the glutamyl-tRNA reductase family. In terms of assembly, homodimer.

It carries out the reaction (S)-4-amino-5-oxopentanoate + tRNA(Glu) + NADP(+) = L-glutamyl-tRNA(Glu) + NADPH + H(+). The protein operates within porphyrin-containing compound metabolism; protoporphyrin-IX biosynthesis; 5-aminolevulinate from L-glutamyl-tRNA(Glu): step 1/2. Catalyzes the NADPH-dependent reduction of glutamyl-tRNA(Glu) to glutamate 1-semialdehyde (GSA). This is Glutamyl-tRNA reductase from Azoarcus sp. (strain BH72).